A 1070-amino-acid polypeptide reads, in one-letter code: MLGDGNEGISTIPGFNQIQFEGFCRFIDQGLTEELYKFPKIEDTDQEIEFQLFVETYQLVEPLIKERDAVYESLTYSSELYVSAGLIWKNSRDMQEQTIFIGNIPLMNSLGTSIVNGIYRIVINQILQSPGIYYRSELDHNGISVYTGTIISDWGGRSELEIDRKARIWARVSRKQKISILVLSSAMGLNLREILENVCYPEIFLSFLNDKERKKIGSKENSILEFYQQFACVGGDPVFSESLCKELQKKFFQQRCELGRIGRRNMNRKLNLDIPQNNTFLLPRDILAAADHLIGLKFGMGALDDMNHLKNKRIRSVADLLQDQFGLALVRLENVVRGTICGAIRHKLIPTPQNLVTSPPLTTTYESFFGLHPLSQVLDRTNPLTQIVHGRKLSYLGPGGLTGRTASFRIRDIHPSHYGRICPIDTSEGINVGLIGSLSIHARIGHWGSLESPFYEISERSTGVRMLYLSPGSDEYYMVAAGNSLALNRDIQEEQVVPARYRQEFLTIAWEQVHLRSIFPFQYFSIGASLIPFIEHNDANRALMSSNMQRQAVPLSRSEKCIVGTGLERQAALDSGALAIAEREGRIVYTNTDKILLAGNGDILSIPLVIYQRSNKNTCMHQKLRVPRGKCIKKGQILADGAATVGGELALGKNVLVAYIPWEGYNFEDAVLITERLVYEDIYTSFHIRKYEIHTHVTSQGPEKVTNEIPHLEAHLLRNLDKKGIVMLGSWVETGDILVGKLTPQVVKESSYAPEDRLLRAILGIQVSTSKETCLKLPIGGRGRVIDVRWIQKRGGSSYNPETIRVYISQKREIKVGDKVAGRHGNKGIISKILPRQDMPYLQDGRSVDMVFNPLGVPSRMNVGQIFECSLGLAGSLLDRHYRIAPFDERYEQEASRKLVFSELYEASKQTANPWVFEPEYPGKSRIFDGRTGNPFEQPVIIGKPYILKLIHQVDDKIHGRSSGHYALVTQQPLRGRAKQGGQRVGEMEVWALEGFGVAHILQEMLTYKSDHIRARQEVLGTTIIGGTIPNPEDAPESFRLLVRELRSLALELNHFLVSEKNFQINRKEA.

Belongs to the RNA polymerase beta chain family. In plastids the minimal PEP RNA polymerase catalytic core is composed of four subunits: alpha, beta, beta', and beta''. When a (nuclear-encoded) sigma factor is associated with the core the holoenzyme is formed, which can initiate transcription.

The protein localises to the plastid. It localises to the chloroplast. It catalyses the reaction RNA(n) + a ribonucleoside 5'-triphosphate = RNA(n+1) + diphosphate. DNA-dependent RNA polymerase catalyzes the transcription of DNA into RNA using the four ribonucleoside triphosphates as substrates. This chain is DNA-directed RNA polymerase subunit beta, found in Solanum tuberosum (Potato).